The sequence spans 70 residues: Small ribosomal subunit protein bS21 (70 aa).

Belongs to the bacterial ribosomal protein bS21 family.

The polypeptide is Small ribosomal subunit protein bS21 (Wolinella succinogenes (strain ATCC 29543 / DSM 1740 / CCUG 13145 / JCM 31913 / LMG 7466 / NCTC 11488 / FDC 602W) (Vibrio succinogenes)).